The chain runs to 105 residues: Class I hydrophobin 1 (105 aa).

The first 17 residues, Met-1 to Ala-17, serve as a signal peptide directing secretion. 4 cysteine pairs are disulfide-bonded: Cys-36/Cys-85, Cys-44/Cys-78, Cys-45/Cys-63, and Cys-86/Cys-100. N-linked (GlcNAc...) asparagine glycans are attached at residues Asn-48, Asn-67, and Asn-97.

The protein belongs to the fungal hydrophobin family. In terms of assembly, self-assembles to form functional amyloid fibrils called rodlets. Self-assembly into fibrillar rodlets occurs spontaneously at hydrophobic:hydrophilic interfaces and the rodlets further associate laterally to form amphipathic monolayers. As to expression, abundant on conidia and aerial structures formed in vitro and emerging from disease lesions on infected tomato plants.

Its subcellular location is the secreted. The protein resides in the cell wall. Aerial growth, conidiation, and dispersal of filamentous fungi in the environment rely upon a capability of their secreting small amphipathic proteins called hydrophobins (HPBs) with low sequence identity. Class I can self-assemble into an outermost layer of rodlet bundles on aerial cell surfaces, conferring cellular hydrophobicity that supports fungal growth, development and dispersal; whereas Class II form highly ordered films at water-air interfaces through intermolecular interactions but contribute nothing to the rodlet structure. Hcf-1 is a class I hydrophobin that is not necessary for the development of hyphae or conidia but acts as the main determinant of conidium hydrophobicity and, thus, is required for efficient water-mediated dispersal of conidia. Forms a component of the rodlet layer, but other hydrophobins must also participate in this proces. The polypeptide is Class I hydrophobin 1 (Passalora fulva (Tomato leaf mold)).